The sequence spans 213 residues: MFTIKEEIANAITHGIGVLLSIPALVFLIIFAANYGSAWDIVSFTIFGVSMLLLYLSSTLLHSITHKKTKDILEIIDHSAIYVLIAGTYTPFLLGPLKGTLGFTLLVIVWSLALGGIVFKIFFVKRFILLSTFVYLVMGWLMIIAVKPLYASLSGAGFSLLFLGGILYSVGTIFYIWKKIPFHHAIWHSFVLGGSAAMFFCVLFYCVKVPFLS.

7 consecutive transmembrane segments (helical) span residues 11-31, 41-61, 75-95, 103-123, 127-147, 157-177, and 185-205; these read AITH…LIIF, IVSF…STLL, IIDH…FLLG, FTLL…KIFF, FILL…IAVK, GFSL…FYIW, and AIWH…VLFY.

The protein belongs to the UPF0073 (Hly-III) family.

The protein resides in the cell membrane. In Bacillus subtilis (strain 168), this protein is Hemolysin-3 homolog (yplQ).